The chain runs to 462 residues: L-seryl-tRNA(Sec) selenium transferase (462 aa).

Residue lysine 295 is modified to N6-(pyridoxal phosphate)lysine.

The protein belongs to the SelA family. In terms of assembly, homodecamer; pentamer of dimers. Binds only one seryl-tRNA(Sec) per dimer. Requires pyridoxal 5'-phosphate as cofactor.

It is found in the cytoplasm. It carries out the reaction L-seryl-tRNA(Sec) + selenophosphate + H(+) = L-selenocysteinyl-tRNA(Sec) + phosphate. Its pathway is aminoacyl-tRNA biosynthesis; selenocysteinyl-tRNA(Sec) biosynthesis; selenocysteinyl-tRNA(Sec) from L-seryl-tRNA(Sec) (bacterial route): step 1/1. Converts seryl-tRNA(Sec) to selenocysteinyl-tRNA(Sec) required for selenoprotein biosynthesis. The chain is L-seryl-tRNA(Sec) selenium transferase from Klebsiella pneumoniae (strain 342).